We begin with the raw amino-acid sequence, 328 residues long: MPQSASVDDHGAQAPHPQIAAYLDALKFERQLSPHTLQSYTRELAVLQRLGAQHAANIDLTQLQSHHIRRMMAQLHGDGLSGRSIARALSAWRGWFKWMALRDAAVTANPVDGVRAPKSPKRLPKALSVEQAVALMEQLPGDDAETIRDRAVNELFYSCGLRLSELVSLDMRHVKAGAYESASWLDLEAREVQVLGKGSKRRTVPVGTKATEALAAWLAVRAQLAKSDAAPEDAHALFLSPRGKRLAQRQIQLRMKRNAIAAGVPADVHPHVLRHSFATHMLQSSGDLRAVQELLGHASIASTQVYTSLDFQHLAKIYDQAHPRAKKK.

In terms of domain architecture, Core-binding (CB) spans 13-100; the sequence is QAPHPQIAAY…AWRGWFKWMA (88 aa). In terms of domain architecture, Tyr recombinase spans 122 to 319; sequence RLPKALSVEQ…DFQHLAKIYD (198 aa). Active-site residues include arginine 162, lysine 197, histidine 271, arginine 274, and histidine 297. The active-site O-(3'-phospho-DNA)-tyrosine intermediate is the tyrosine 306.

Belongs to the 'phage' integrase family. XerC subfamily. In terms of assembly, forms a cyclic heterotetrameric complex composed of two molecules of XerC and two molecules of XerD.

The protein resides in the cytoplasm. Functionally, site-specific tyrosine recombinase, which acts by catalyzing the cutting and rejoining of the recombining DNA molecules. The XerC-XerD complex is essential to convert dimers of the bacterial chromosome into monomers to permit their segregation at cell division. It also contributes to the segregational stability of plasmids. The polypeptide is Tyrosine recombinase XerC (Ralstonia pickettii (strain 12J)).